Consider the following 165-residue polypeptide: Lipoprotein signal peptidase (165 aa).

Helical transmembrane passes span 12 to 32 (WLWL…LILQ), 70 to 90 (WFFA…MYRA), and 102 to 122 (ALII…GFVV). Residues Asp123 and Asp141 contribute to the active site. A helical transmembrane segment spans residues 137-157 (FNLADTAICIGAALVVLEGFL).

The protein belongs to the peptidase A8 family.

It localises to the cell inner membrane. It catalyses the reaction Release of signal peptides from bacterial membrane prolipoproteins. Hydrolyzes -Xaa-Yaa-Zaa-|-(S,diacylglyceryl)Cys-, in which Xaa is hydrophobic (preferably Leu), and Yaa (Ala or Ser) and Zaa (Gly or Ala) have small, neutral side chains.. It functions in the pathway protein modification; lipoprotein biosynthesis (signal peptide cleavage). In terms of biological role, this protein specifically catalyzes the removal of signal peptides from prolipoproteins. This chain is Lipoprotein signal peptidase, found in Cronobacter sakazakii (strain ATCC BAA-894) (Enterobacter sakazakii).